Here is a 263-residue protein sequence, read N- to C-terminus: MNSCQQKAMEKLLHGHGCANQLLIMDQTESDSSMEREDLAKSVLHCFSDALSILIDTNDHQDDQSNNSSPQDSSPVLESSRKPLHKRGRKTSMAESSDYHRHESSTPIYHDGFLWRKYGQKQIKESEYQRSYYKCAYTKDQNCEAKKQVQKIQHNPPLYSTTYFGQHICQLHQAYATFPIDTSDFEEHEGSHMIRFGHPNISFSSSTSNLRQHQNHQDRIKDEYMKPVIAEDWSPSQWMSSEVALAVEAFEFNPFWTSHDLSS.

The segment at Asp-59–Ser-104 is disordered. Low complexity predominate over residues Gln-64–Ser-74. A DNA-binding region (WRKY) is located at residues Ser-104–Ala-174.

Belongs to the WRKY group III family.

It is found in the nucleus. In terms of biological role, transcription factor. Interacts specifically with the W box (5'-(T)TGAC[CT]-3'), a frequently occurring elicitor-responsive cis-acting element. The protein is Probable WRKY transcription factor 62 (WRKY62) of Arabidopsis thaliana (Mouse-ear cress).